The following is an 80-amino-acid chain: UPF0291 protein EF_1580 (80 aa).

Positions 60–80 (TDVTPEKLKKIQREKGLHNRK) are disordered. Residues 63-80 (TPEKLKKIQREKGLHNRK) show a composition bias toward basic and acidic residues.

The protein belongs to the UPF0291 family.

It localises to the cytoplasm. The sequence is that of UPF0291 protein EF_1580 from Enterococcus faecalis (strain ATCC 700802 / V583).